A 252-amino-acid polypeptide reads, in one-letter code: Phosphoglycolate phosphatase (252 aa).

The active-site Nucleophile is D13. Residues D13, D15, and D192 each coordinate Mg(2+).

Belongs to the HAD-like hydrolase superfamily. CbbY/CbbZ/Gph/YieH family. As to quaternary structure, monomer. It depends on Mg(2+) as a cofactor. Chloride is required as a cofactor.

It catalyses the reaction 2-phosphoglycolate + H2O = glycolate + phosphate. The protein operates within organic acid metabolism; glycolate biosynthesis; glycolate from 2-phosphoglycolate: step 1/1. Functionally, specifically catalyzes the dephosphorylation of 2-phosphoglycolate. Is involved in the dissimilation of the intracellular 2-phosphoglycolate formed during the DNA repair of 3'-phosphoglycolate ends, a major class of DNA lesions induced by oxidative stress. The sequence is that of Phosphoglycolate phosphatase from Salmonella typhimurium (strain LT2 / SGSC1412 / ATCC 700720).